A 125-amino-acid polypeptide reads, in one-letter code: Small ribosomal subunit protein bS6 (125 aa).

The interval proline 99–glutamine 125 is disordered. Positions serine 105–serine 115 are enriched in basic and acidic residues. The segment covering threonine 116–glutamine 125 has biased composition (polar residues).

Belongs to the bacterial ribosomal protein bS6 family.

In terms of biological role, binds together with bS18 to 16S ribosomal RNA. This Bordetella petrii (strain ATCC BAA-461 / DSM 12804 / CCUG 43448) protein is Small ribosomal subunit protein bS6.